The following is a 144-amino-acid chain: Peptide methionine sulfoxide reductase B7 (144 aa).

Residues 19–140 (DEEWRAVLSP…NSVSLKFSSA (122 aa)) form the MsrB domain. Zn(2+) is bound by residues Cys-58, Cys-61, Cys-104, and Cys-107. An intrachain disulfide couples Cys-76 to Cys-129. Residue Cys-129 is the Nucleophile of the active site.

This sequence belongs to the MsrB Met sulfoxide reductase family. Requires Zn(2+) as cofactor.

The protein localises to the cytoplasm. It localises to the cytosol. It carries out the reaction L-methionyl-[protein] + [thioredoxin]-disulfide + H2O = L-methionyl-(R)-S-oxide-[protein] + [thioredoxin]-dithiol. In terms of biological role, catalyzes the reduction of methionine sulfoxide (MetSO) to methionine in proteins. Plays a protective role against oxidative stress by restoring activity to proteins that have been inactivated by methionine oxidation. MSRB family specifically reduces the MetSO R-enantiomer. The sequence is that of Peptide methionine sulfoxide reductase B7 (MSRB7) from Arabidopsis thaliana (Mouse-ear cress).